We begin with the raw amino-acid sequence, 473 residues long: Thermostable beta-glucosidase B (473 aa).

Glu-196 acts as the Proton donor in catalysis. Residue Glu-378 is the Nucleophile of the active site.

It belongs to the glycosyl hydrolase 1 family.

Its subcellular location is the cytoplasm. The catalysed reaction is Hydrolysis of terminal, non-reducing beta-D-glucosyl residues with release of beta-D-glucose.. This Thermobispora bispora (Microbispora bispora) protein is Thermostable beta-glucosidase B (bglB).